The primary structure comprises 1120 residues: Isoleucine--tRNA ligase (1120 aa).

Positions 64-74 (PFANGLPHYGH) match the 'HIGH' region motif. The 'KMSKS' region motif lies at 647-651 (KLSKR). Lysine 650 contacts ATP.

It belongs to the class-I aminoacyl-tRNA synthetase family. IleS type 2 subfamily. As to quaternary structure, monomer. The cofactor is Zn(2+).

It localises to the cytoplasm. It catalyses the reaction tRNA(Ile) + L-isoleucine + ATP = L-isoleucyl-tRNA(Ile) + AMP + diphosphate. Catalyzes the attachment of isoleucine to tRNA(Ile). As IleRS can inadvertently accommodate and process structurally similar amino acids such as valine, to avoid such errors it has two additional distinct tRNA(Ile)-dependent editing activities. One activity is designated as 'pretransfer' editing and involves the hydrolysis of activated Val-AMP. The other activity is designated 'posttransfer' editing and involves deacylation of mischarged Val-tRNA(Ile). This Ehrlichia canis (strain Jake) protein is Isoleucine--tRNA ligase.